A 255-amino-acid chain; its full sequence is Protein PH0439 (255 aa).

This sequence belongs to the CinA family.

The sequence is that of Protein PH0439 from Pyrococcus horikoshii (strain ATCC 700860 / DSM 12428 / JCM 9974 / NBRC 100139 / OT-3).